We begin with the raw amino-acid sequence, 263 residues long: Proenkephalin-A (263 aa).

Residues 1–24 (MARFLGLCTWLLALGPGLLATVRA) form the signal peptide. Cystine bridges form between Cys-26–Cys-48, Cys-30–Cys-52, and Cys-33–Cys-65. Propeptides lie at residues 192 to 203 (SPHLEDETKELQ) and 213 to 223 (VGRPEWWMDYQ). Phosphoserine is present on Ser-247.

Belongs to the opioid neuropeptide precursor family. In terms of processing, proenkephalin-A is cleaved by CTSL to generate Met-enkephalin. Post-translationally, processed and degraded by ACE. Probably cleaved by ACE. In terms of processing, processed by ACE to generate Met-enkephalin in the nucleus accumbens of the brain. Post-translationally, the N-terminal domain contains 6 conserved cysteines thought to be involved in disulfide bonding and/or processing. Secreted by neuroendocrine chromaffin cells through cromaffin granules.

The protein resides in the cytoplasmic vesicle. Its subcellular location is the secretory vesicle. The protein localises to the chromaffin granule lumen. It localises to the secreted. Functionally, neuropeptide that competes with and mimic the effects of opiate drugs. They play a role in a number of physiologic functions, including pain perception and responses to stress. Met-enkephalin-Arg-Phe neuropeptide acts as a strong ligand of Mu-type opioid receptor OPRM1. Met-enkephalin-Arg-Phe-binding to OPRM1 in the nucleus accumbens of the brain increases activation of OPRM1, leading to long-term synaptic depression of glutamate release. Its function is as follows. Increases glutamate release in the striatum and decreases GABA concentration in the striatum. In terms of biological role, increases glutamate release in the striatum. Functionally, enkelytin possesses antibacterial activity against Gram-positive bacteria such as Micrococcus luteus and Bacillus megaterium. This chain is Proenkephalin-A (PENK), found in Bos taurus (Bovine).